The following is an 89-amino-acid chain: Small ribosomal subunit protein uS15 (89 aa).

Belongs to the universal ribosomal protein uS15 family. Part of the 30S ribosomal subunit. Forms a bridge to the 50S subunit in the 70S ribosome, contacting the 23S rRNA.

Its function is as follows. One of the primary rRNA binding proteins, it binds directly to 16S rRNA where it helps nucleate assembly of the platform of the 30S subunit by binding and bridging several RNA helices of the 16S rRNA. In terms of biological role, forms an intersubunit bridge (bridge B4) with the 23S rRNA of the 50S subunit in the ribosome. The protein is Small ribosomal subunit protein uS15 of Brevibacillus brevis (strain 47 / JCM 6285 / NBRC 100599).